A 246-amino-acid polypeptide reads, in one-letter code: Indole-3-glycerol phosphate synthase (246 aa).

Belongs to the TrpC family.

It catalyses the reaction 1-(2-carboxyphenylamino)-1-deoxy-D-ribulose 5-phosphate + H(+) = (1S,2R)-1-C-(indol-3-yl)glycerol 3-phosphate + CO2 + H2O. It participates in amino-acid biosynthesis; L-tryptophan biosynthesis; L-tryptophan from chorismate: step 4/5. This is Indole-3-glycerol phosphate synthase from Sulfurisphaera tokodaii (strain DSM 16993 / JCM 10545 / NBRC 100140 / 7) (Sulfolobus tokodaii).